The sequence spans 56 residues: Sec-independent protein translocase protein TatA (56 aa).

Residues 1 to 21 (MALGPWQIFLILVIILVLFGA) traverse the membrane as a helical segment.

The protein belongs to the TatA/E family. As to quaternary structure, the Tat system comprises two distinct complexes: a TatABC complex, containing multiple copies of TatA, TatB and TatC subunits, and a separate TatA complex, containing only TatA subunits. Substrates initially bind to the TatABC complex, which probably triggers association of the separate TatA complex to form the active translocon.

It is found in the cell inner membrane. Part of the twin-arginine translocation (Tat) system that transports large folded proteins containing a characteristic twin-arginine motif in their signal peptide across membranes. TatA could form the protein-conducting channel of the Tat system. In Ehrlichia ruminantium (strain Welgevonden), this protein is Sec-independent protein translocase protein TatA.